We begin with the raw amino-acid sequence, 169 residues long: 6,7-dimethyl-8-ribityllumazine synthase (169 aa).

Residues F24, A58–E60, and A82–V84 contribute to the 5-amino-6-(D-ribitylamino)uracil site. E87 to T88 is a (2S)-2-hydroxy-3-oxobutyl phosphate binding site. The Proton donor role is filled by H90. N115 contributes to the 5-amino-6-(D-ribitylamino)uracil binding site. Position 129 (R129) interacts with (2S)-2-hydroxy-3-oxobutyl phosphate.

It belongs to the DMRL synthase family.

The enzyme catalyses (2S)-2-hydroxy-3-oxobutyl phosphate + 5-amino-6-(D-ribitylamino)uracil = 6,7-dimethyl-8-(1-D-ribityl)lumazine + phosphate + 2 H2O + H(+). It functions in the pathway cofactor biosynthesis; riboflavin biosynthesis; riboflavin from 2-hydroxy-3-oxobutyl phosphate and 5-amino-6-(D-ribitylamino)uracil: step 1/2. In terms of biological role, catalyzes the formation of 6,7-dimethyl-8-ribityllumazine by condensation of 5-amino-6-(D-ribitylamino)uracil with 3,4-dihydroxy-2-butanone 4-phosphate. This is the penultimate step in the biosynthesis of riboflavin. The chain is 6,7-dimethyl-8-ribityllumazine synthase from Cupriavidus metallidurans (strain ATCC 43123 / DSM 2839 / NBRC 102507 / CH34) (Ralstonia metallidurans).